The sequence spans 132 residues: Sec-independent protein translocase protein TatB (132 aa).

The chain crosses the membrane as a helical span at residues 2-22; sequence FDGIGFMELLLIGILGLVVLG. Residues 86–132 form a disordered region; it reads LKSAAQSVNRPYKVEDISPASSSAPVDPAPTETKTAETSANSEKPNG. Positions 103 to 115 are enriched in low complexity; that stretch reads SPASSSAPVDPAP. Over residues 117 to 132 the composition is skewed to polar residues; sequence ETKTAETSANSEKPNG.

Belongs to the TatB family. The Tat system comprises two distinct complexes: a TatABC complex, containing multiple copies of TatA, TatB and TatC subunits, and a separate TatA complex, containing only TatA subunits. Substrates initially bind to the TatABC complex, which probably triggers association of the separate TatA complex to form the active translocon.

Its subcellular location is the cell inner membrane. In terms of biological role, part of the twin-arginine translocation (Tat) system that transports large folded proteins containing a characteristic twin-arginine motif in their signal peptide across membranes. Together with TatC, TatB is part of a receptor directly interacting with Tat signal peptides. TatB may form an oligomeric binding site that transiently accommodates folded Tat precursor proteins before their translocation. The protein is Sec-independent protein translocase protein TatB of Shewanella sediminis (strain HAW-EB3).